The chain runs to 1604 residues: Ubiquitin carboxyl-terminal hydrolase 32 (1604 aa).

3 EF-hand domains span residues 91-126 (KDEE…VDGK), 228-263 (IRPS…CCRG), and 264-299 (PLAE…LLEV). Ca(2+) is bound by residues Asp-241, Asn-243, Asp-245, His-247, Glu-252, Asp-277, Asp-279, Asp-281, and Glu-288. The DUSP domain maps to 369-585 (ATPEEEGQII…ANLALPRPVI (217 aa)). One can recognise a USP domain in the interval 734–1567 (TGLSNLGNTC…SAYILFYEQQ (834 aa)). Catalysis depends on Cys-743, which acts as the Nucleophile. Residue Tyr-1173 is modified to Phosphotyrosine. Disordered regions lie at residues 1343 to 1362 (KKVD…SKSP) and 1367 to 1431 (ANII…DASK). 4 positions are modified to phosphoserine: Ser-1350, Ser-1372, Ser-1376, and Ser-1454. Residues 1367–1399 (ANIISSPKGSPSSSRKSGTSCPSSKNSSPNSSP) are compositionally biased toward low complexity. His-1526 functions as the Proton acceptor in the catalytic mechanism. At Ser-1588 the chain carries Phosphoserine. Cysteine methyl ester is present on Cys-1601. A lipid anchor (S-farnesyl cysteine) is attached at Cys-1601. The propeptide at 1602–1604 (VLQ) is removed in mature form.

This sequence belongs to the peptidase C19 family.

The protein localises to the golgi apparatus membrane. It catalyses the reaction Thiol-dependent hydrolysis of ester, thioester, amide, peptide and isopeptide bonds formed by the C-terminal Gly of ubiquitin (a 76-residue protein attached to proteins as an intracellular targeting signal).. In terms of biological role, deubiquitinase that can remove conjugated ubiquitin from target proteins, such as RAB7A and LAMTOR1. Acts as a positive regulator of the mTORC1 signaling by mediating deubiquitination of LAMTOR1, thereby promoting the association between LAMTOR1 and the lysosomal V-ATPase complex and subsequent activation of the mTORC1 complex. In Homo sapiens (Human), this protein is Ubiquitin carboxyl-terminal hydrolase 32 (USP32).